A 104-amino-acid chain; its full sequence is Large ribosomal subunit protein uL24 (104 aa).

It belongs to the universal ribosomal protein uL24 family. As to quaternary structure, part of the 50S ribosomal subunit.

Functionally, one of two assembly initiator proteins, it binds directly to the 5'-end of the 23S rRNA, where it nucleates assembly of the 50S subunit. In terms of biological role, one of the proteins that surrounds the polypeptide exit tunnel on the outside of the subunit. The protein is Large ribosomal subunit protein uL24 of Halothermothrix orenii (strain H 168 / OCM 544 / DSM 9562).